We begin with the raw amino-acid sequence, 227 residues long: Cytochrome c oxidase subunit 2 (227 aa).

The Mitochondrial intermembrane segment spans residues 1–14 (MAYPFQLGLQDATS). Residues 15-45 (PIMEELTNFHDHTLMIVFLISSLVLYLISLM) form a helical membrane-spanning segment. Residues 46 to 59 (LTTKLIHTNTMDAQ) are Mitochondrial matrix-facing. A helical transmembrane segment spans residues 60–87 (EVETVWTILPAIILIMIALPSLRILYLM). The Mitochondrial intermembrane portion of the chain corresponds to 88 to 227 (DEINNPVLTV…LFENWSTSMI (140 aa)). Positions 161, 196, 198, 200, 204, and 207 each coordinate Cu cation. Glu198 is a Mg(2+) binding site.

It belongs to the cytochrome c oxidase subunit 2 family. As to quaternary structure, component of the cytochrome c oxidase (complex IV, CIV), a multisubunit enzyme composed of 14 subunits. The complex is composed of a catalytic core of 3 subunits MT-CO1, MT-CO2 and MT-CO3, encoded in the mitochondrial DNA, and 11 supernumerary subunits COX4I, COX5A, COX5B, COX6A, COX6B, COX6C, COX7A, COX7B, COX7C, COX8 and NDUFA4, which are encoded in the nuclear genome. The complex exists as a monomer or a dimer and forms supercomplexes (SCs) in the inner mitochondrial membrane with NADH-ubiquinone oxidoreductase (complex I, CI) and ubiquinol-cytochrome c oxidoreductase (cytochrome b-c1 complex, complex III, CIII), resulting in different assemblies (supercomplex SCI(1)III(2)IV(1) and megacomplex MCI(2)III(2)IV(2)). Found in a complex with TMEM177, COA6, COX18, COX20, SCO1 and SCO2. Interacts with TMEM177 in a COX20-dependent manner. Interacts with COX20. Interacts with COX16. Cu cation serves as cofactor.

It localises to the mitochondrion inner membrane. The enzyme catalyses 4 Fe(II)-[cytochrome c] + O2 + 8 H(+)(in) = 4 Fe(III)-[cytochrome c] + 2 H2O + 4 H(+)(out). Functionally, component of the cytochrome c oxidase, the last enzyme in the mitochondrial electron transport chain which drives oxidative phosphorylation. The respiratory chain contains 3 multisubunit complexes succinate dehydrogenase (complex II, CII), ubiquinol-cytochrome c oxidoreductase (cytochrome b-c1 complex, complex III, CIII) and cytochrome c oxidase (complex IV, CIV), that cooperate to transfer electrons derived from NADH and succinate to molecular oxygen, creating an electrochemical gradient over the inner membrane that drives transmembrane transport and the ATP synthase. Cytochrome c oxidase is the component of the respiratory chain that catalyzes the reduction of oxygen to water. Electrons originating from reduced cytochrome c in the intermembrane space (IMS) are transferred via the dinuclear copper A center (CU(A)) of subunit 2 and heme A of subunit 1 to the active site in subunit 1, a binuclear center (BNC) formed by heme A3 and copper B (CU(B)). The BNC reduces molecular oxygen to 2 water molecules using 4 electrons from cytochrome c in the IMS and 4 protons from the mitochondrial matrix. In Gerbillurus vallinus (Brush-tailed hairy-footed gerbil), this protein is Cytochrome c oxidase subunit 2 (MT-CO2).